A 124-amino-acid polypeptide reads, in one-letter code: GISTFFLSVTLFTVNRTCDLLTPPPWYPITVKNTHHTSRHRSIFFILSVMIGKGTREDVQLSLSSLFQGVVMIVGQNPQAPSDLGIEGGERAQGQNAHSVHGPGLQTERGGSQLQMVGHPLREL.

A disordered region spans residues 82 to 124; that stretch reads SDLGIEGGERAQGQNAHSVHGPGLQTERGGSQLQMVGHPLREL.

This is an uncharacterized protein from Human cytomegalovirus (strain AD169) (HHV-5).